The following is a 322-amino-acid chain: Polyisoprenyl-teichoic acid--peptidoglycan teichoic acid transferase TagT (322 aa).

Residues 1–19 (MEERSQRRKKKRKLKKWVK) are Cytoplasmic-facing. A helical; Signal-anchor for type II membrane protein transmembrane segment spans residues 20–40 (VVAGLMAFLVIAAGSVGAYAF). The Extracellular portion of the chain corresponds to 41 to 322 (VKLNNASKEA…KKELQNDLGV (282 aa)).

The protein belongs to the LytR/CpsA/Psr (LCP) family. In terms of assembly, interacts with MreB.

Its subcellular location is the cell membrane. It functions in the pathway cell wall biogenesis. May catalyze the final step in cell wall teichoic acid biosynthesis, the transfer of the anionic cell wall polymers (APs) from their lipid-linked precursor to the cell wall peptidoglycan (PG). This Bacillus subtilis (strain 168) protein is Polyisoprenyl-teichoic acid--peptidoglycan teichoic acid transferase TagT.